We begin with the raw amino-acid sequence, 316 residues long: Ribosomal RNA small subunit methyltransferase H (316 aa).

Residues 35 to 37 (GGH), aspartate 55, tyrosine 79, aspartate 100, and glutamine 107 each bind S-adenosyl-L-methionine.

It belongs to the methyltransferase superfamily. RsmH family.

The protein resides in the cytoplasm. The catalysed reaction is cytidine(1402) in 16S rRNA + S-adenosyl-L-methionine = N(4)-methylcytidine(1402) in 16S rRNA + S-adenosyl-L-homocysteine + H(+). In terms of biological role, specifically methylates the N4 position of cytidine in position 1402 (C1402) of 16S rRNA. The chain is Ribosomal RNA small subunit methyltransferase H from Nitrosospira multiformis (strain ATCC 25196 / NCIMB 11849 / C 71).